A 198-amino-acid chain; its full sequence is Small ribosomal subunit protein uS4 (198 aa).

Residues 91 to 154 (SRLDNVVYRL…KNLNIVQEAV (64 aa)) form the S4 RNA-binding domain.

Belongs to the universal ribosomal protein uS4 family. Part of the 30S ribosomal subunit. Contacts protein S5. The interaction surface between S4 and S5 is involved in control of translational fidelity.

Functionally, one of the primary rRNA binding proteins, it binds directly to 16S rRNA where it nucleates assembly of the body of the 30S subunit. With S5 and S12 plays an important role in translational accuracy. This Onion yellows phytoplasma (strain OY-M) protein is Small ribosomal subunit protein uS4.